We begin with the raw amino-acid sequence, 46 residues long: Major cold shock protein (46 aa).

The CSD domain maps to 1 to 46 (EKGFGFLTQNNGGADVFVHFRAIASEGFKTLTEGQKVSFDVEQGQK).

In terms of assembly, homodimer.

It is found in the cytoplasm. This Photobacterium leiognathi subsp. mandapamensis (Photobacterium mandapamensis) protein is Major cold shock protein (cspA).